The primary structure comprises 419 residues: 2-amino-3-ketobutyrate coenzyme A ligase, mitochondrial (419 aa).

A mitochondrion-targeting transit peptide spans 1 to 21 (MWPGNAWRAALFWVPRGRRAQ). Lysine 45 bears the N6-acetyllysine; alternate mark. N6-succinyllysine; alternate is present on lysine 45. 134–135 (CY) provides a ligand contact to pyridoxal 5'-phosphate. Histidine 159 lines the substrate pocket. Lysine 187 is modified (N6-acetyllysine; alternate). Lysine 187 bears the N6-succinyllysine; alternate mark. Pyridoxal 5'-phosphate is bound by residues serine 206, 262–265 (TLGK), and 295–296 (SN). Lysine 265 is modified (N6-(pyridoxal phosphate)lysine). An N6-succinyllysine mark is found at lysine 326 and lysine 368. Lysine 383 carries the N6-acetyllysine; alternate modification. Position 383 is an N6-succinyllysine; alternate (lysine 383). Arginine 389 contacts substrate.

It belongs to the class-II pyridoxal-phosphate-dependent aminotransferase family. Pyridoxal 5'-phosphate is required as a cofactor. In terms of tissue distribution, strongly expressed in heart, brain, liver and pancreas. Also found in lung.

It is found in the mitochondrion. The protein resides in the nucleus. It catalyses the reaction glycine + acetyl-CoA = (2S)-2-amino-3-oxobutanoate + CoA. Its function is as follows. Pyridoxal phosphate (PLP) dependent enzyme, which catalyzes the cleavage of 2-amino-3-oxobutanoate to glycine and acetyl-CoA. This Homo sapiens (Human) protein is 2-amino-3-ketobutyrate coenzyme A ligase, mitochondrial.